A 689-amino-acid polypeptide reads, in one-letter code: ATP-dependent zinc metalloprotease FtsH 2 (689 aa).

Residues 1-3 (MRK) are Cytoplasmic-facing. The chain crosses the membrane as a helical span at residues 4–24 (FFRGASFYILAFIIILFIVQN). Residues 25–111 (FGRPTQEIDE…SAAPPPTTPW (87 aa)) lie on the Extracellular side of the membrane. Residues 112–132 (FIELLPSIFMVLIFIVFWFVF) traverse the membrane as a helical segment. At 133 to 689 (MQQSQGGGNR…QDNEENRKEE (557 aa)) the chain is on the cytoplasmic side. 205–212 (GPPGTGKT) is an ATP binding site. His-427 is a Zn(2+) binding site. The active site involves Glu-428. Positions 431 and 503 each coordinate Zn(2+). Over residues 661 to 673 (EELIEVSSDKEEE) the composition is skewed to basic and acidic residues. The segment at 661–689 (EELIEVSSDKEEEKDNQDDQDNEENRKEE) is disordered.

It in the central section; belongs to the AAA ATPase family. This sequence in the C-terminal section; belongs to the peptidase M41 family. In terms of assembly, homohexamer. Requires Zn(2+) as cofactor.

It is found in the cell membrane. In terms of biological role, acts as a processive, ATP-dependent zinc metallopeptidase for both cytoplasmic and membrane proteins. Plays a role in the quality control of integral membrane proteins. In Alkaliphilus metalliredigens (strain QYMF), this protein is ATP-dependent zinc metalloprotease FtsH 2.